The primary structure comprises 494 residues: Flavin-containing monooxygenase ustF2 (494 aa).

Residues 1–21 (MANPQTTRVAVVGAGISGVLA) form the signal peptide. 13–18 (GAGISG) lines the FAD pocket. The tract at residues 73–93 (EPSYPAMKPSKADPPATNEQE) is disordered. 250–255 (GGGVSS) lines the NADP(+) pocket. N-linked (GlcNAc...) asparagine glycosylation is present at N459.

It belongs to the FMO family.

It functions in the pathway mycotoxin biosynthesis. In terms of biological role, flavin-containing monooxygenase; part of the gene cluster that mediates the biosynthesis of the secondary metabolite ustiloxin B, an antimitotic tetrapeptide. First, ustA is processed by the subtilisin-like endoprotease Kex2 that is outside the ustiloxin B gene cluster, at the C-terminal side of Arg-Lys, after transfer to Golgi apparatus through the endoplasmic reticulum (ER). Cleavage by KEX2 generates 16 peptides YAIG-I to YAIG-XVI. To process the precursor peptide further, at least two peptidases are necessary to cleave the N-terminal and C-terminal sides of the Tyr-Ala-Ile-Gly core peptide which serves as backbone for the synthesis of ustiloxin B, through cyclization and modification of the tyrosine with a non-protein coding amino acid, norvaline. One of the two peptidases must be the serine peptidase ustP; and the other pepdidase is probably ustH. Macrocyclization of the core peptide derived from ustA requires the tyrosinase ustQ, as well as the homologous oxidases ustYa and ustYb, and leads to the production of the first cyclization product N-desmethylustiloxin F. For the formation of N-desmethylustiloxin F, three oxidation steps are required, hydroxylation at the benzylic position, hydroxylation at either the aromatic ring of Tyr or beta-position of Ile, and oxidative cyclization. UstQ may catalyze the oxidation of a phenol moiety, whereas the ustYa and ustYb are most likely responsible for the remaining two-step oxidations. N-desmethylustiloxin F is then methylated by ustM to yield ustiloxin F which in turn substrate of the cytochrome P450 monooxygenase ustC which catalyzes the formation of S-deoxyustiloxin H. The flavoprotein monooxygenases ustF1 and ustF2 then participate in the modification of the side chain of S-deoxyustiloxin H, leading to the synthesis of an oxime intermediate, via ustiloxin H. Finally, carboxylative dehydration performed by the cysteine desulfurase-like protein ustD yields ustiloxin B. This Aspergillus flavus (strain ATCC 200026 / FGSC A1120 / IAM 13836 / NRRL 3357 / JCM 12722 / SRRC 167) protein is Flavin-containing monooxygenase ustF2.